The following is a 148-amino-acid chain: Endoribonuclease YbeY (148 aa).

Zn(2+) contacts are provided by H112, H116, and H122.

It belongs to the endoribonuclease YbeY family. Zn(2+) serves as cofactor.

It localises to the cytoplasm. Single strand-specific metallo-endoribonuclease involved in late-stage 70S ribosome quality control and in maturation of the 3' terminus of the 16S rRNA. This Albidiferax ferrireducens (strain ATCC BAA-621 / DSM 15236 / T118) (Rhodoferax ferrireducens) protein is Endoribonuclease YbeY.